Consider the following 66-residue polypeptide: Prokaryotic ubiquitin-like protein UBact (66 aa).

A disordered region spans residues 1–66 (MNMRYTLMPE…AERYRQRTGE (66 aa)). Residues 30-66 (GGPRRPETGSPDKDNLLKRMRKVDPKQAERYRQRTGE) are compositionally biased toward basic and acidic residues. Glu-66 is covalently cross-linked (Isoglutamyl lysine isopeptide (Glu-Lys) (interchain with K-? in acceptor proteins)).

It belongs to the ubiquitin-like protein UBact family.

In terms of biological role, may function as a protein modifier covalently attached to lysine residues of substrate proteins. This may serve to target the modified proteins for degradation by proteasomes. This Nitrospira moscoviensis protein is Prokaryotic ubiquitin-like protein UBact.